A 561-amino-acid polypeptide reads, in one-letter code: Putative transport protein YbjL (561 aa).

5 helical membrane passes run 8-28 (LLNGNYILLLFVVLALGLCLG), 32-52 (LGSIQLGNSIGVLVVSLLLGQ), 66-86 (FMLFIFCVGVEAGPNFFSIFF), 94-114 (MLALVMVGSALVIALGLGKLF), and 158-178 (NLSLGYALTYLIGLVSLIVGA). RCK C-terminal domains follow at residues 200 to 288 (RGLD…SFRN) and 292 to 373 (VFDR…RIGF). The next 5 helical transmembrane spans lie at 383-403 (LLAFCAFFVIGLMIGMITFQF), 406-426 (FSFGMGNAAGLLFAGIMLGFM), 451-471 (VFMAGVGLSAGSGINNGLGAI), 475-495 (MLIAGLIVSLVPVVICFLFGA), and 540-560 (AIANVLLTLAGTIIVMVWPGL).

This sequence belongs to the AAE transporter (TC 2.A.81) family. YbjL subfamily.

It is found in the cell membrane. The chain is Putative transport protein YbjL from Escherichia coli O139:H28 (strain E24377A / ETEC).